A 70-amino-acid polypeptide reads, in one-letter code: Cold shock-like protein CspJ (70 aa).

In terms of domain architecture, CSD spans 7–67; that stretch reads GLVKWFNPEK…GPKGPSAVNV (61 aa).

It is found in the cytoplasm. This Salmonella typhi protein is Cold shock-like protein CspJ (cspJ).